The sequence spans 229 residues: Uracil-DNA glycosylase (229 aa).

Aspartate 64 functions as the Proton acceptor in the catalytic mechanism.

It belongs to the uracil-DNA glycosylase (UDG) superfamily. UNG family.

It is found in the cytoplasm. It catalyses the reaction Hydrolyzes single-stranded DNA or mismatched double-stranded DNA and polynucleotides, releasing free uracil.. Excises uracil residues from the DNA which can arise as a result of misincorporation of dUMP residues by DNA polymerase or due to deamination of cytosine. The protein is Uracil-DNA glycosylase of Salmonella agona (strain SL483).